Reading from the N-terminus, the 477-residue chain is MDTTNSSRWSELPIDILRSLLEQKGGCAIYNPDEAKDYKTKRDSSGIRFLANSVNWFLVLDSRSNLYIIDVFSEKKIDLPPLESIKNGLYSLEQVGDEKKKEYIVVWFFDKGTEYIAFCKNGEDHYRDIPIRKNVCKELQDLYDMLLHGGNNLYISKTRQSIRKLRFFEEEGFIDVDNSEILPFRKISFYIDGARFSNNIAVTTSREVLLVQNFFYETTRYRSFRLYKKDPNPDLNATINNPYPMVELCSLGDVSASGFGDRKRSCLDMCMFNLVTKKLKRFPDLSNLKLTDARCTTTSSGNNWKFSIIVSEVIDSKFLELRFADLDSESQQQTKLKFSMLKSEFVDMNKEDSQIEINEKETKINQEHDQSDETQAKRRRSLTSSVWQDLVSVGGEANVKEIDRSMETPNSSPPWSELPGDILRSVFERLSFVDFQRAKQTCPIKRSKSNCLRLWLITFGGLERLPHLSSVCFISWT.

The stretch at 346–377 forms a coiled coil; the sequence is VDMNKEDSQIEINEKETKINQEHDQSDETQAK. The 47-residue stretch at 412-458 folds into the F-box domain; that stretch reads SPPWSELPGDILRSVFERLSFVDFQRAKQTCPIKRSKSNCLRLWLIT.

In Arabidopsis thaliana (Mouse-ear cress), this protein is Probable F-box protein At5g25300.